The chain runs to 299 residues: Non-homologous end-joining factor 1 (299 aa).

The globular head stretch occupies residues 1–135; sequence MEELEQGLLM…ASPSLVSQHL (135 aa). Residues 128–170 adopt a coiled-coil conformation; the sequence is PSLVSQHLIRPLMGMSLALQCQVRELATLLHMKDLEIQDYQES. Residues Ser-132, Ser-203, Ser-245, and Ser-251 each carry the phosphoserine; by PRKDC modification. The interval 224–288 is C-terminal tail; the sequence is QEVQVGQKHQ…GPLQRPQLSK (65 aa). The span at 255-266 shows a compositional bias: polar residues; that stretch reads NQPEQLVSSAPT. Positions 255 to 299 are disordered; it reads NQPEQLVSSAPTLSAPEKESTGTSGPLQRPQLSKVKRKKPRGLFS. Residue Ser-263 is modified to Phosphoserine. Residue Thr-266 is modified to Phosphothreonine. Ser-287 bears the Phosphoserine mark. The segment covering 288–299 has biased composition (basic residues); it reads KVKRKKPRGLFS. The XLM motif lies at 289 to 299; sequence VKRKKPRGLFS.

It belongs to the XRCC4-XLF family. XLF subfamily. In terms of assembly, homodimer; mainly exists as a homodimer when not associated with XRCC4. Interacts with XRCC4; the interaction is direct and is mediated via a head-to-head interaction between N-terminal head regions. Component of the core long-range non-homologous end joining (NHEJ) complex (also named DNA-PK complex) composed of PRKDC, LIG4, XRCC4, XRCC6/Ku70, XRCC5/Ku86 and NHEJ1/XLF. Additional component of the NHEJ complex includes PAXX. Following autophosphorylation, PRKDC dissociates from DNA, leading to formation of the short-range NHEJ complex, composed of LIG4, XRCC4, XRCC6/Ku70, XRCC5/Ku86 and NHEJ1/XLF. Interacts with POLL (DNA polymerase lambda); promoting POLL recruitment to double-strand breaks (DSBs) and stimulation of the end-filling activity of POLL. In terms of processing, phosphorylated by PRKDC at the C-terminus in response to DNA damage. Phosphorylations by PRKDC at the C-terminus of XRCC4 and NHEJ1/XLF are highly redundant and regulate ability of the XRCC4-NHEJ1/XLF subcomplex to bridge DNA. Phosphorylation does not prevent interaction with XRCC4 but disrupts ability to bridge DNA and promotes detachment from DNA. Ubiquitously expressed.

The protein localises to the nucleus. The protein resides in the chromosome. In terms of biological role, DNA repair protein involved in DNA non-homologous end joining (NHEJ); it is required for double-strand break (DSB) repair and V(D)J recombination and is also involved in telomere maintenance. Plays a key role in NHEJ by promoting the ligation of various mismatched and non-cohesive ends. Together with PAXX, collaborates with DNA polymerase lambda (POLL) to promote joining of non-cohesive DNA ends. May act in concert with XRCC5-XRCC6 (Ku) to stimulate XRCC4-mediated joining of blunt ends and several types of mismatched ends that are non-complementary or partially complementary. In some studies, has been shown to associate with XRCC4 to form alternating helical filaments that bridge DNA and act like a bandage, holding together the broken DNA until it is repaired. Alternatively, it has also been shown that rather than forming filaments, a single NHEJ1 dimer interacts through both head domains with XRCC4 to promote the close alignment of DNA ends. The XRCC4-NHEJ1/XLF subcomplex binds to the DNA fragments of a DSB in a highly diffusive manner and robustly bridges two independent DNA molecules, holding the broken DNA fragments in close proximity to one other. The mobility of the bridges ensures that the ends remain accessible for further processing by other repair factors. Binds DNA in a length-dependent manner. The protein is Non-homologous end-joining factor 1 of Homo sapiens (Human).